A 188-amino-acid chain; its full sequence is uncharacterized protein (188 aa).

Residues 133-153 (PKGRPTMKLQYPKMPPKPKTR) form a disordered region.

This sequence belongs to the IS150/IS1296 orfA family.

This is an uncharacterized protein from Haemophilus influenzae (strain ATCC 51907 / DSM 11121 / KW20 / Rd).